We begin with the raw amino-acid sequence, 183 residues long: uncharacterized protein (183 aa).

To A.muscaria DOPA 4,5-dioxygenase.

This is an uncharacterized protein from Botryotinia fuckeliana (Noble rot fungus).